Here is a 110-residue protein sequence, read N- to C-terminus: U-scoloptoxin(16)-Er6a (110 aa).

The N-terminal stretch at 1 to 26 (MTSTRKLSVSCLIVFMVSSLIAVSSG) is a signal peptide.

The protein belongs to the scoloptoxin-16 family. Contains 4 disulfide bonds. As to expression, expressed by the venom gland.

The protein localises to the secreted. The protein is U-scoloptoxin(16)-Er6a of Ethmostigmus rubripes (Giant centipede).